Here is a 400-residue protein sequence, read N- to C-terminus: NADH-quinone oxidoreductase subunit D (400 aa).

Belongs to the complex I 49 kDa subunit family. In terms of assembly, NDH-1 is composed of 14 different subunits. Subunits NuoB, C, D, E, F, and G constitute the peripheral sector of the complex.

It localises to the cell inner membrane. The enzyme catalyses a quinone + NADH + 5 H(+)(in) = a quinol + NAD(+) + 4 H(+)(out). Its function is as follows. NDH-1 shuttles electrons from NADH, via FMN and iron-sulfur (Fe-S) centers, to quinones in the respiratory chain. The immediate electron acceptor for the enzyme in this species is believed to be a menaquinone. Couples the redox reaction to proton translocation (for every two electrons transferred, four hydrogen ions are translocated across the cytoplasmic membrane), and thus conserves the redox energy in a proton gradient. This chain is NADH-quinone oxidoreductase subunit D, found in Chlorobaculum tepidum (strain ATCC 49652 / DSM 12025 / NBRC 103806 / TLS) (Chlorobium tepidum).